The chain runs to 415 residues: Queuine tRNA-ribosyltransferase accessory subunit 2 (415 aa).

Zn(2+) contacts are provided by cysteine 351, cysteine 353, cysteine 356, and histidine 382.

Belongs to the queuine tRNA-ribosyltransferase family. QTRT2 subfamily. As to quaternary structure, heterodimer of a catalytic subunit QTRT1 and an accessory subunit QTRT2. Zn(2+) serves as cofactor.

The protein localises to the cytoplasm. The protein resides in the mitochondrion outer membrane. Functionally, non-catalytic subunit of the queuine tRNA-ribosyltransferase (TGT) that catalyzes the base-exchange of a guanine (G) residue with queuine (Q) at position 34 (anticodon wobble position) in tRNAs with GU(N) anticodons (tRNA-Asp, -Asn, -His and -Tyr), resulting in the hypermodified nucleoside queuosine (7-(((4,5-cis-dihydroxy-2-cyclopenten-1-yl)amino)methyl)-7-deazaguanosine). The protein is Queuine tRNA-ribosyltransferase accessory subunit 2 of Pongo abelii (Sumatran orangutan).